The sequence spans 210 residues: Small ribosomal subunit protein uS7 (210 aa).

The protein belongs to the universal ribosomal protein uS7 family.

This Podocoryna carnea (Hydrozoan) protein is Small ribosomal subunit protein uS7 (RPS5).